A 506-amino-acid chain; its full sequence is Anaerobic nitric oxide reductase transcription regulator NorR (506 aa).

At Asp-57 the chain carries 4-aspartylphosphate. The Sigma-54 factor interaction domain maps to 187–416 (MIGLSPAMTQ…LEHAIHRAVV (230 aa)). ATP contacts are provided by residues 215 to 222 (GETGTGKE) and 278 to 287 (ADNGTLFLDE). Residues 481–500 (WAASARALETDVANLHRLAK) constitute a DNA-binding region (H-T-H motif).

It functions in the pathway nitrogen metabolism; nitric oxide reduction. Its function is as follows. Required for the expression of anaerobic nitric oxide (NO) reductase, acts as a transcriptional activator for at least the norVW operon. Activation also requires sigma-54. This chain is Anaerobic nitric oxide reductase transcription regulator NorR, found in Salmonella gallinarum (strain 287/91 / NCTC 13346).